The following is a 280-amino-acid chain: Apoptosis regulator ced-9 (280 aa).

Residues 33–59 (GTEPTDFGINSDAQDLPSPSRQASTRR) form a disordered region. Positions 43-59 (SDAQDLPSPSRQASTRR) are enriched in polar residues. The BH4 motif lies at 80-99 (IEGFVVDYFTHRIRQNGMEW). A BH1 motif is present at residues 160–179 (QTDQCPMSYGRLIGLISFGG). The BH2 motif lies at 213-229 (NWKEHNRSWDDFMTLGK).

Belongs to the Bcl-2 family. In terms of assembly, interacts with asymmetric homodimer ced-4; the interaction sequesters ced-4. Interacts with egl-1; the interaction results in ced-4 release. Interacts with dre-1; the interaction inhibits ced-9 activity, either directly or indirectly. Interacts with dct-1. May form a complex composed of ced-9, ced-4 and mac-1. Interacts with dynamin-related protein drp-1 (via residues 280-502); the interaction is enhanced by GTP rather than GDP; the interaction is probably direct and may occur at the mitochondrion. Interaction with drp-1 may be enhanced by interaction of ced-9 with egl-1, but not with ced-4. A ced-9/egl-1 complex may recruit drp-1 to the mitochondrial surface. Interacts with fzo-1; interaction may be suppressed by interaction of ced-9 with egl-1.

The protein localises to the perikaryon. Its subcellular location is the synapse. It is found in the endomembrane system. It localises to the mitochondrion membrane. The protein resides in the cytoplasm. Plays a major role in programmed cell death (PCD, apoptosis). egl-1 binds to and directly inhibits the activity of ced-9, releasing the cell death activator ced-4 from a ced-9/ced-4 containing protein complex and allowing ced-4 to activate the cell-killing caspase ced-3. During larval development, required for the elimination of transient presynaptic components downstream of egl-1 and upstream of ced-4 and ced-3 apoptotic pathway. Has been shown in one study to be dispensable in mitochondrial dynamics and morphology during early embryonic development. However, another study shows that a egl-1/ced-9 containing complex may promote drp-1-dependent mitochondrial fission. The sequence is that of Apoptosis regulator ced-9 (ced-9) from Caenorhabditis elegans.